Consider the following 172-residue polypeptide: Adenine phosphoribosyltransferase (172 aa).

The protein belongs to the purine/pyrimidine phosphoribosyltransferase family. As to quaternary structure, homodimer.

Its subcellular location is the cytoplasm. The catalysed reaction is AMP + diphosphate = 5-phospho-alpha-D-ribose 1-diphosphate + adenine. Its pathway is purine metabolism; AMP biosynthesis via salvage pathway; AMP from adenine: step 1/1. Functionally, catalyzes a salvage reaction resulting in the formation of AMP, that is energically less costly than de novo synthesis. This is Adenine phosphoribosyltransferase from Clostridium tetani (strain Massachusetts / E88).